Consider the following 89-residue polypeptide: Small ribosomal subunit protein uS15 (89 aa).

The protein belongs to the universal ribosomal protein uS15 family. As to quaternary structure, part of the 30S ribosomal subunit. Forms a bridge to the 50S subunit in the 70S ribosome, contacting the 23S rRNA.

Functionally, one of the primary rRNA binding proteins, it binds directly to 16S rRNA where it helps nucleate assembly of the platform of the 30S subunit by binding and bridging several RNA helices of the 16S rRNA. Forms an intersubunit bridge (bridge B4) with the 23S rRNA of the 50S subunit in the ribosome. The polypeptide is Small ribosomal subunit protein uS15 (Prochlorococcus marinus subsp. pastoris (strain CCMP1986 / NIES-2087 / MED4)).